The following is a 345-amino-acid chain: Trans-3-hydroxy-L-proline dehydratase (345 aa).

The active-site Proton acceptor is Ser-90. Substrate-binding positions include 91–92 (GS), Asp-252, and 257–258 (GT).

It belongs to the proline racemase family.

The catalysed reaction is trans-3-hydroxy-L-proline = 1-pyrroline-2-carboxylate + H2O. Catalyzes the dehydration of trans-3-hydroxy-L-proline (t3LHyp) to Delta(1)-pyrroline-2-carboxylate (Pyr2C). May be involved in a degradation pathway that converts t3LHyp to L-proline, which would allow S.novella to grow on t3LHyp as a sole carbon source. This chain is Trans-3-hydroxy-L-proline dehydratase, found in Ancylobacter novellus (strain ATCC 8093 / DSM 506 / JCM 20403 / CCM 1077 / IAM 12100 / NBRC 12443 / NCIMB 10456) (Starkeya novella).